The following is a 432-amino-acid chain: Serine--tRNA ligase (432 aa).

230 to 232 is a binding site for L-serine; the sequence is TAE. 261–263 contacts ATP; the sequence is RSE. Glu284 serves as a coordination point for L-serine. Residue 348–351 coordinates ATP; it reads EVSS. Ser383 provides a ligand contact to L-serine.

The protein belongs to the class-II aminoacyl-tRNA synthetase family. Type-1 seryl-tRNA synthetase subfamily. Homodimer. The tRNA molecule binds across the dimer.

The protein localises to the cytoplasm. It catalyses the reaction tRNA(Ser) + L-serine + ATP = L-seryl-tRNA(Ser) + AMP + diphosphate + H(+). It carries out the reaction tRNA(Sec) + L-serine + ATP = L-seryl-tRNA(Sec) + AMP + diphosphate + H(+). It functions in the pathway aminoacyl-tRNA biosynthesis; selenocysteinyl-tRNA(Sec) biosynthesis; L-seryl-tRNA(Sec) from L-serine and tRNA(Sec): step 1/1. In terms of biological role, catalyzes the attachment of serine to tRNA(Ser). Is also able to aminoacylate tRNA(Sec) with serine, to form the misacylated tRNA L-seryl-tRNA(Sec), which will be further converted into selenocysteinyl-tRNA(Sec). In Limosilactobacillus fermentum (strain NBRC 3956 / LMG 18251) (Lactobacillus fermentum), this protein is Serine--tRNA ligase.